Here is a 332-residue protein sequence, read N- to C-terminus: Glyceraldehyde-3-phosphate dehydrogenase 3 (332 aa).

NAD(+) is bound by residues R11, I12, and D33. Residues K46 and K63 each participate in a glycyl lysine isopeptide (Lys-Gly) (interchain with G-Cter in ubiquitin) cross-link. Residue T120 coordinates NAD(+). Residue 149–151 (SCT) participates in D-glyceraldehyde 3-phosphate binding. The active-site Nucleophile is C150. Cysteine persulfide is present on residues C150 and C154. K160 participates in a covalent cross-link: Glycyl lysine isopeptide (Lys-Gly) (interchain with G-Cter in URM1). D-glyceraldehyde 3-phosphate-binding positions include T180, 209–210 (TG), and R232. Position 302 is a phosphoserine (S302). Residue K307 forms a Glycyl lysine isopeptide (Lys-Gly) (interchain with G-Cter in URM1) linkage. NAD(+) is bound by residues N314 and Y318.

Belongs to the glyceraldehyde-3-phosphate dehydrogenase family. As to quaternary structure, homotetramer. In terms of processing, conjugated to URM1, a ubiquitin-like protein, in response to oxidative stresses. The attachment of URM1 to lysine residues exclusively depends on the presence of a peroxidatic cysteine in the target protein, with low specificity for the particular residue, motif, or structural context at which urmylation can occur. The URM1-conjugation reaction is mechanistically and directly coupled to the process of cysteine persulfidation, transfering the sulfur atom of the URM1 thiocarboxyl group to redox-active cysteine residues in the target protein if it is exposed to oxidative conditions. Post-translationally, persulfidated on specific redox-active cysteine residues. Persulfidation (also called protein S-sulfhydration) may provide a molecular mechanism that enables cells to protect vulnerable cysteine residues from reactive oxygen species (ROS) under stress conditions.

The protein resides in the cytoplasm. It localises to the mitochondrion. The enzyme catalyses D-glyceraldehyde 3-phosphate + phosphate + NAD(+) = (2R)-3-phospho-glyceroyl phosphate + NADH + H(+). The catalysed reaction is NADH + H2O = (6R)-NADHX. It carries out the reaction NADH + H2O = (6S)-NADHX. It catalyses the reaction NADPH + H2O = (6R)-NADPHX. The enzyme catalyses NADPH + H2O = (6S)-NADPHX. It functions in the pathway carbohydrate degradation; glycolysis; pyruvate from D-glyceraldehyde 3-phosphate: step 1/5. Its function is as follows. Glyceraldehyde-3-phosphate dehydrogenase (GAPDH) involved in glycolysis and gluconeogenesis. Catalyzes the reaction of glyceraldehyde-3-phosphate to 1,3 bis-phosphoglycerate. The contribution of the TDH1, TDH2, and TDH3 to the total glyceraldehyde-3-phosphate dehydrogenase activity is 10-15, 25-30, and 50-60%, respectively. As a side activity, catalyzes the hydration of the nicotinamide ring of NADH or NADPH at the C6 position to give the corresponding hydrates, NADHX and NADPHX, which exist as R and S epimers, that cannot act as electron donors or acceptors and inhibit several dehydrogenases, making them toxic. The polypeptide is Glyceraldehyde-3-phosphate dehydrogenase 3 (Saccharomyces cerevisiae (strain ATCC 204508 / S288c) (Baker's yeast)).